Consider the following 59-residue polypeptide: Photosystem II reaction center protein K (59 aa).

A propeptide spanning residues 1–22 is cleaved from the precursor; the sequence is MLNIFSLICLNSALYSSSFFFG. The chain crosses the membrane as a helical span at residues 30–50; that stretch reads FLSPIVDFMPVIPLFFFLLAF.

In terms of assembly, PSII is composed of 1 copy each of membrane proteins PsbA, PsbB, PsbC, PsbD, PsbE, PsbF, PsbH, PsbI, PsbJ, PsbK, PsbL, PsbM, PsbT, PsbX, PsbY, PsbZ, Psb30/Ycf12, at least 3 peripheral proteins of the oxygen-evolving complex and a large number of cofactors. It forms dimeric complexes. This protein, PsbL and plastoquinone-9 are found in PSII dimers but not seen in PSII monomers.

The protein resides in the plastid. Its subcellular location is the chloroplast thylakoid membrane. Its function is as follows. One of the components of the core complex of photosystem II (PSII). PSII is a light-driven water:plastoquinone oxidoreductase that uses light energy to abstract electrons from H(2)O, generating O(2) and a proton gradient subsequently used for ATP formation. It consists of a core antenna complex that captures photons, and an electron transfer chain that converts photonic excitation into a charge separation. May be involved in PSII dimerization. One of the components of the core complex of photosystem II (PSII). PSII is a light-driven water:plastoquinone oxidoreductase that uses light energy to abstract electrons from H(2)O, generating O(2) and a proton gradient subsequently used for ATP formation. It consists of a core antenna complex that captures photons, and an electron transfer chain that converts photonic excitation into a charge separation. The protein is Photosystem II reaction center protein K of Spinacia oleracea (Spinach).